A 334-amino-acid chain; its full sequence is N-acetylmuramoyl-L-alanine amidase sle1 (334 aa).

An N-terminal signal peptide occupies residues 1–25 (MQKKVIAAIIGTSAISAVAATQANA). Residues 27–70 (TTHTVKPGESVWAISNKYGISIAKLKSLNNLTSNLIFPNQVLKV) enclose the LysM 1 domain. Positions 71–86 (SGSSNSTSNSSRPSTN) are enriched in low complexity. The segment at 71–90 (SGSSNSTSNSSRPSTNSGGG) is disordered. 2 LysM domains span residues 91 to 134 (SYYT…KLKV) and 158 to 201 (SYYT…KLKV). The Peptidase C51 domain occupies 210–334 (GSATTTNRGY…YQVNNYRYIH (125 aa)).

It localises to the secreted. It is found in the cell surface. It carries out the reaction Hydrolyzes the link between N-acetylmuramoyl residues and L-amino acid residues in certain cell-wall glycopeptides.. Peptidoglycan hydrolase involved in the splitting of the septum during cell division. The sequence is that of N-acetylmuramoyl-L-alanine amidase sle1 (sle1) from Staphylococcus aureus (strain USA300).